The sequence spans 132 residues: Small ribosomal subunit protein bS6 (132 aa).

Residues 94-132 (DAVTEESQLAKNADEKRARKATTRRPDRDDSDDNDHSED) form a disordered region. Over residues 122 to 132 (DDSDDNDHSED) the composition is skewed to acidic residues.

The protein belongs to the bacterial ribosomal protein bS6 family.

In terms of biological role, binds together with bS18 to 16S ribosomal RNA. The polypeptide is Small ribosomal subunit protein bS6 (Psychrobacter arcticus (strain DSM 17307 / VKM B-2377 / 273-4)).